The chain runs to 293 residues: Protease HtpX (293 aa).

A run of 2 helical transmembrane segments spans residues 4-24 (IALF…VLSL) and 34-54 (GLMI…LLMS). H139 is a binding site for Zn(2+). Residue E140 is part of the active site. Residue H143 coordinates Zn(2+). 2 helical membrane passes run 158-178 (VVNT…AGFM) and 193-213 (LIYF…ASII). A Zn(2+)-binding site is contributed by E222.

Belongs to the peptidase M48B family. The cofactor is Zn(2+).

The protein localises to the cell inner membrane. The sequence is that of Protease HtpX from Escherichia coli O127:H6 (strain E2348/69 / EPEC).